The following is a 790-amino-acid chain: Alpha,alpha-trehalose-phosphate synthase [UDP-forming] B (790 aa).

The protein in the N-terminal section; belongs to the glycosyltransferase 20 family. In the C-terminal section; belongs to the trehalose phosphatase family.

It catalyses the reaction D-glucose 6-phosphate + UDP-alpha-D-glucose = alpha,alpha-trehalose 6-phosphate + UDP + H(+). In terms of biological role, synthesizes trehalose 6-phosphate, the precursor for the production of trehalose, the main carbohydrate storage reserve of the dormant spore. Trehalose accumulates in both prestalk and prespore cells and then is rapidly metabolized during terminal differentiation of stalk cells, while being stored in spores, where it serves as the principal energy and carbon source for germination. The sequence is that of Alpha,alpha-trehalose-phosphate synthase [UDP-forming] B (tpsB) from Dictyostelium discoideum (Social amoeba).